Consider the following 34-residue polypeptide: Toxin Ptu1 (34 aa).

Intrachain disulfides connect C5/C20, C12/C26, and C19/C33.

It localises to the secreted. Its function is as follows. Binds reversibly and blocks N-type voltage-gated calcium channels (Cav). In Peirates turpis (Assassin bug), this protein is Toxin Ptu1.